Reading from the N-terminus, the 61-residue chain is Ferredoxin-2 (61 aa).

2 consecutive 4Fe-4S ferredoxin-type domains span residues 2–27 and 28–61; these read HRIT…SAGD and EIYI…IIKV. [4Fe-4S] cluster contacts are provided by Cys-8, Cys-11, Cys-14, Cys-18, Cys-37, Cys-40, Cys-49, and Cys-53.

[4Fe-4S] cluster serves as cofactor.

Its function is as follows. Ferredoxins are iron-sulfur proteins that transfer electrons in a wide variety of metabolic reactions. This chain is Ferredoxin-2, found in Chlorobium limicola.